A 503-amino-acid polypeptide reads, in one-letter code: Lycopene beta cyclase, chloroplastic/chromoplastic (503 aa).

Residues 1–85 constitute a chloroplast and chromoplast transit peptide; it reads MDTLLRTHNR…DLPLYDPSKA (85 aa). 90-117 is a binding site for NAD(+); the sequence is LAVVGGGPLARSCSTSLGGGLSVVSIDP.

The protein belongs to the lycopene cyclase family.

The protein localises to the plastid. Its subcellular location is the chloroplast. It is found in the chromoplast. The protein resides in the chromoplast membrane. It localises to the chloroplast membrane. The catalysed reaction is a carotenoid psi-end group = a carotenoid beta-end derivative. Its pathway is carotenoid biosynthesis; beta-carotene biosynthesis. The protein operates within carotenoid biosynthesis; beta-zeacarotene biosynthesis. Functionally, catalyzes the double cyclization reaction which converts lycopene to beta-carotene and neurosporene to beta-zeacarotene. The chain is Lycopene beta cyclase, chloroplastic/chromoplastic (LCY1) from Narcissus pseudonarcissus (Daffodil).